The chain runs to 215 residues: Adenylate kinase (215 aa).

10–15 (GAGKGT) contributes to the ATP binding site. Positions 30-59 (STGDIFRDAVNQGSELGQEAQKYMSSGQLV) are NMP. AMP-binding positions include T31, R36, 57-59 (QLV), 85-88 (GFPR), and Q92. Positions 126 to 163 (GRISCRECKRVYNLNFNPPREQGKCDSCGGELVQRNDD) are LID. Residue R127 participates in ATP binding. 2 residues coordinate Zn(2+): C130 and C133. 136 to 137 (VY) contributes to the ATP binding site. Zn(2+) contacts are provided by C150 and C153. AMP is bound by residues R160 and R171. R199 provides a ligand contact to ATP.

Belongs to the adenylate kinase family. As to quaternary structure, monomer.

It is found in the cytoplasm. It catalyses the reaction AMP + ATP = 2 ADP. Its pathway is purine metabolism; AMP biosynthesis via salvage pathway; AMP from ADP: step 1/1. In terms of biological role, catalyzes the reversible transfer of the terminal phosphate group between ATP and AMP. Plays an important role in cellular energy homeostasis and in adenine nucleotide metabolism. The sequence is that of Adenylate kinase from Syntrophomonas wolfei subsp. wolfei (strain DSM 2245B / Goettingen).